We begin with the raw amino-acid sequence, 476 residues long: Sensor protein CzcS (476 aa).

The signal sequence occupies residues 1 to 35 (MRPGTSITPLSLTRRLGLFFALVLSIALASMGAFA). Residues 37-158 (YSLAAQLEAR…DRKQVTARFR (122 aa)) lie on the Periplasmic side of the membrane. A helical membrane pass occupies residues 159 to 179 (TTLVLGTTVGVILTALVGAAI). The Cytoplasmic portion of the chain corresponds to 180–476 (TRRELEPAHV…RPSQDRPVVG (297 aa)). The HAMP domain occupies 181–234 (RRELEPAHVLIKQINRISVERLSYRVDMPPKPTEVRDIASAFNAMLQRLEDGYQ). One can recognise a Histidine kinase domain in the interval 242-455 (DLAHDLRTPL…TRFTLRFPLN (214 aa)). Histidine 245 carries the post-translational modification Phosphohistidine; by autocatalysis.

It is found in the cell inner membrane. The enzyme catalyses ATP + protein L-histidine = ADP + protein N-phospho-L-histidine.. Member of the two-component regulatory system CzcS/CzcR involved in the control of cobalt, zinc and cadmium homeostasis. Probably activates CzcR by phosphorylation. In Cupriavidus metallidurans (strain ATCC 43123 / DSM 2839 / NBRC 102507 / CH34) (Ralstonia metallidurans), this protein is Sensor protein CzcS (czcS).